The sequence spans 607 residues: Terpenoid synthase 9 (607 aa).

Mg(2+) is bound by residues D356, D360, N501, and D509. The DDXXD motif motif lies at 356–360; that stretch reads DDTFD.

This sequence belongs to the terpene synthase family. Tpsa subfamily. Mg(2+) is required as a cofactor. Mn(2+) serves as cofactor. In terms of tissue distribution, predominantly expressed in roots but also in stems, leaves and flowers.

Its subcellular location is the cytoplasm. It participates in secondary metabolite biosynthesis; terpenoid biosynthesis. Involved in terpene biosynthesis in roots. Possesses diterpene (C20) synthase activity in vitro. Does not seem to be involved in sesquiterpene (C15) biosynthesis. This is Terpenoid synthase 9 from Arabidopsis thaliana (Mouse-ear cress).